Consider the following 521-residue polypeptide: Histone deacetylase HDAC1 (521 aa).

The histone deacetylase stretch occupies residues 7–319; that stretch reads KRVCYYYDSD…WTYETSVALA (313 aa). Residue histidine 139 is part of the active site. The disordered stretch occupies residues 376–521; sequence GVQIQAIPED…GAKGAKENNI (146 aa). The segment covering 386–395 has biased composition (acidic residues); that stretch reads AINDESDDED. Serine 391 is modified (phosphoserine). Residues 396–414 are compositionally biased toward basic and acidic residues; it reads KVDKDDRLPQSDKDKRIVP. 3 positions are modified to phosphoserine: serine 419, serine 421, and serine 455. Threonine 457 carries the phosphothreonine modification. Over residues 459–470 the composition is skewed to basic and acidic residues; that stretch reads SEIKDEKEKGDG. A compositionally biased stretch (low complexity) spans 476-502; sequence STASNTNSNNNSNNKSDNDAGATANAG. The segment covering 503–513 has biased composition (gly residues); that stretch reads SGSGSGSGAGA.

This sequence belongs to the histone deacetylase family. HD type 1 subfamily. In terms of assembly, component of a form of the Esc/E(z) complex present specifically during early embryogenesis which is composed of Caf1-55, esc, E(z), Su(z)12, Pcl and HDAC1. The Esc/E(z) complex may also associate with Pcl and HDAC1 during early embryogenesis. This complex is distinct from the PRC1 complex, which contains many other PcG proteins like Pc, Ph, Psc, Su(z)2. The 2 complexes however cooperate and interact together during the first 3 hours of development to establish PcG silencing. Interacts with the histone methyltransferase Su(var)3-9. Component of a complex that contains at least HDAC1, CoRest and Su(var)3-3/Hdm. Component of the DREAM complex at least composed of Myb, Caf1-55, mip40, mip120, mip130, E2f2, Dp, Rbf, Rbf2, lin-52, HDAC1 and l(3)mbt. Interacts with the chromatin-remodeler Mi-2. Interacts with Rrp6.

The protein resides in the nucleus. It catalyses the reaction N(6)-acetyl-L-lysyl-[histone] + H2O = L-lysyl-[histone] + acetate. Its function is as follows. Catalyzes the deacetylation of lysine residues on the N-terminal part of the core histones (H2A, H2B, H3 and H4). Histone deacetylation may constitute a tag for epigenetic repression and plays an important role in transcriptional regulation, cell cycle progression and developmental events. For instance, deacetylation of histone H3 may be a prerequisite for the subsequent recruitment of the histone methyltransferase Su(var)3-9 to histones. Involved in position-effect variegation (PEV). In the larval brain, part of a regulatory network including the transcriptional repressors klu, dpn and E(spl)mgamma-HLH which is required for type II neuroblast self-renewal and for maintaining erm in an inactive state in intermediate neural progenitors (INP). The polypeptide is Histone deacetylase HDAC1 (Drosophila melanogaster (Fruit fly)).